We begin with the raw amino-acid sequence, 258 residues long: Clathrin light chain 3 (258 aa).

Residues 1–18 (MSSTLSNEESGLGDSNRS) show a composition bias toward polar residues. Positions 1–96 (MSSTLSNEES…PPPSAMEKEE (96 aa)) are disordered. Residue serine 2 is modified to N-acetylserine. Over residues 34 to 50 (SRFQSQRFDSSFSNFDS) the composition is skewed to low complexity. A compositionally biased stretch (polar residues) spans 66–79 (RPETQSPPSINSFD). Residues 90-152 (SAMEKEEGFA…TIENNKKLNR (63 aa)) form an involved in binding clathrin heavy chain region. Residues 105-164 (RLNALRLEEKEKEEKEMVQQILEAAEQYKAEFYSKRNVTIENNKKLNREKEKFFLENQEK) are a coiled coil. Positions 224-234 (LKHNPPTHMKP) are enriched in basic residues. The segment at 224 to 258 (LKHNPPTHMKPKLPSPSGADPNVSVSEQVTVTEKL) is disordered. A compositionally biased stretch (polar residues) spans 246–258 (VSVSEQVTVTEKL).

The protein belongs to the clathrin light chain family. Clathrin coats are formed from molecules containing 3 heavy chains and 3 light chains.

The protein localises to the cytoplasmic vesicle membrane. Its subcellular location is the membrane. It is found in the coated pit. Functionally, clathrin is the major protein of the polyhedral coat of coated pits and vesicles. The chain is Clathrin light chain 3 from Arabidopsis thaliana (Mouse-ear cress).